A 24-amino-acid polypeptide reads, in one-letter code: U1-plectoxin-Pt1e (24 aa).

Residues cysteine 4 and cysteine 18 are joined by a disulfide bond.

It belongs to the neurotoxin 02 (plectoxin) family. 02 (plectoxin) subfamily. In terms of processing, contains 5 disulfide bonds. In terms of tissue distribution, expressed by the venom gland.

It localises to the secreted. Functionally, potent toxin that may paralyze and/or kill insect pests such as H.virescens (lepidoptera), S.exigua (beet armyworm) and M.sexta (tobacco hornworm). This chain is U1-plectoxin-Pt1e, found in Plectreurys tristis (Spider).